Here is a 302-residue protein sequence, read N- to C-terminus: Recombination-associated protein RdgC (302 aa).

The protein belongs to the RdgC family.

Its subcellular location is the cytoplasm. It localises to the nucleoid. Functionally, may be involved in recombination. In Actinobacillus pleuropneumoniae serotype 3 (strain JL03), this protein is Recombination-associated protein RdgC.